The following is a 77-amino-acid chain: Cysteine-rich protein 1 (77 aa).

Residues 2–63 form the LIM zinc-binding domain; it reads PKCPKCSKEV…HPCYAAMFGP (62 aa). 2 positions are modified to N6-acetyllysine: Lys-9 and Lys-22. An Omega-N-methylarginine modification is found at Arg-68.

Seems to have a role in zinc absorption and may function as an intracellular zinc transport protein. This Bos taurus (Bovine) protein is Cysteine-rich protein 1 (CRIP1).